The sequence spans 470 residues: MEFFPIFLKLRHQRCLLVGGGEVALRKARLLLAAGASLQVVAPELAPELADLAERGELEHLPGRYAPALLDGMRLAVAATDDAEVNRAVAADAEARGILVNVVDDAEASRYISPAIIDRSPLMVAVASGGSVPVLARSIRARLESLIPAGYGRLARFGSSFRDAVKARFPDVDARRRFWETVLEGPLADAVMNGDEAAARAEMEKRIAAGGADRAGAVYLVGAGPGNPDLLTFRALRLMQQADVVLYDKLVAPELLELVRRDAERVYVGKARANHALPQDDINQLLVDLARQGKRVLRLKGGDPFTFGRGGEEIATLAEHGIAFEVVPGITSASGAAAYAGIPLTHRDYAQSVTFVTGHKQDGSIDLDWQALTRPQQTVVVYMGVSTAAELCQAFVDNGRAASTPAAAVEWATTERQRTVCGTLAALPGLMASHGIASPALIIVGEVVELADKLSWYRRSENSAVTIQED.

The tract at residues 1 to 203 is precorrin-2 dehydrogenase /sirohydrochlorin ferrochelatase; that stretch reads MEFFPIFLKL…GDEAAARAEM (203 aa). NAD(+)-binding positions include 22–23 and 43–44; these read EV and PE. The residue at position 128 (Ser128) is a Phosphoserine. A uroporphyrinogen-III C-methyltransferase region spans residues 216-470; sequence GAVYLVGAGP…ENSAVTIQED (255 aa). Position 225 (Pro225) interacts with S-adenosyl-L-methionine. Asp248 (proton acceptor) is an active-site residue. Lys270 acts as the Proton donor in catalysis. S-adenosyl-L-methionine-binding positions include 301–303, Met383, and Ala412; that span reads GGD.

In the N-terminal section; belongs to the precorrin-2 dehydrogenase / sirohydrochlorin ferrochelatase family. The protein in the C-terminal section; belongs to the precorrin methyltransferase family.

It catalyses the reaction uroporphyrinogen III + 2 S-adenosyl-L-methionine = precorrin-2 + 2 S-adenosyl-L-homocysteine + H(+). The enzyme catalyses precorrin-2 + NAD(+) = sirohydrochlorin + NADH + 2 H(+). The catalysed reaction is siroheme + 2 H(+) = sirohydrochlorin + Fe(2+). The protein operates within cofactor biosynthesis; adenosylcobalamin biosynthesis; precorrin-2 from uroporphyrinogen III: step 1/1. It participates in cofactor biosynthesis; adenosylcobalamin biosynthesis; sirohydrochlorin from precorrin-2: step 1/1. Its pathway is porphyrin-containing compound metabolism; siroheme biosynthesis; precorrin-2 from uroporphyrinogen III: step 1/1. It functions in the pathway porphyrin-containing compound metabolism; siroheme biosynthesis; siroheme from sirohydrochlorin: step 1/1. The protein operates within porphyrin-containing compound metabolism; siroheme biosynthesis; sirohydrochlorin from precorrin-2: step 1/1. In terms of biological role, multifunctional enzyme that catalyzes the SAM-dependent methylations of uroporphyrinogen III at position C-2 and C-7 to form precorrin-2 via precorrin-1. Then it catalyzes the NAD-dependent ring dehydrogenation of precorrin-2 to yield sirohydrochlorin. Finally, it catalyzes the ferrochelation of sirohydrochlorin to yield siroheme. The protein is Siroheme synthase of Chromobacterium violaceum (strain ATCC 12472 / DSM 30191 / JCM 1249 / CCUG 213 / NBRC 12614 / NCIMB 9131 / NCTC 9757 / MK).